The primary structure comprises 513 residues: Sugar transport protein MST8 (513 aa).

The Cytoplasmic portion of the chain corresponds to 1–17 (MAGGAMTDTDGAHKNYP). A helical membrane pass occupies residues 18 to 38 (GKMTIFVFLACLVASSGGLIF). At 39-81 (GYDIGISGGVTSMDSFLIKFFPSVYAKEKEMVETNQYCKFDSE) the chain is on the extracellular side. A helical transmembrane segment spans residues 82–102 (LLTLFTSSLYLAALIASLFAS). The Cytoplasmic segment spans residues 103–116 (VITRKFGRRITMLG). A helical transmembrane segment spans residues 117 to 137 (GGVIFLVGAILNGAAADVAML). Topologically, residues 138–139 (II) are extracellular. A helical transmembrane segment spans residues 140 to 160 (GRILLGIGVGFSNQAVPLYLS). Residues 161–166 (EMAPAR) lie on the Cytoplasmic side of the membrane. A helical transmembrane segment spans residues 167–187 (MRGMLNISFQLMITVGILAAN). The Extracellular portion of the chain corresponds to 188 to 201 (LINYFTDKIAGGWG). Residues 202 to 222 (WRVSLGLAAVPAVIMAGGSLF) form a helical membrane-spanning segment. The Cytoplasmic segment spans residues 223–294 (LPDTPNSLLS…LVMSVLIPTL (72 aa)). A helical membrane pass occupies residues 295 to 315 (QQLTGINVVMFYAPVLFKTIG). At 316–320 (FGGTA) the chain is on the extracellular side. Residues 321 to 341 (SLMSAVITGLVNMFATFVSIA) form a helical membrane-spanning segment. The Cytoplasmic portion of the chain corresponds to 342–347 (TVDRLG). A helical membrane pass occupies residues 348–368 (RRKLLLQGGVQMIFAQFILGT). Residues 369–385 (LIAVKFGTAGVANISRG) are Extracellular-facing. A helical membrane pass occupies residues 386–406 (YAIVVVLCICVFVSAFAWSWG). Over 407–425 (PLGWLVPSEIFPLEIRSAA) the chain is Cytoplasmic. The helical transmembrane segment at 426–446 (QSVVVVFNMAFTFIIAQIFLM) threads the bilayer. The Extracellular portion of the chain corresponds to 447 to 450 (MLCH). Residues 451-471 (LKFGLFYFFGAMELIMTGFVF) form a helical membrane-spanning segment. Residues 472-512 (FFLPETKGIPIEEMDRIWGKHWYWRRFVGAGAGGKVEITST) are Cytoplasmic-facing.

The protein belongs to the major facilitator superfamily. Sugar transporter (TC 2.A.1.1) family. In terms of tissue distribution, expressed specifically in anthers.

Its subcellular location is the membrane. Its function is as follows. Mediates active uptake of hexoses by sugar:proton symport. May play an important role in transporting monosaccharides during anther development. In Oryza sativa subsp. japonica (Rice), this protein is Sugar transport protein MST8.